Consider the following 357-residue polypeptide: UDP-N-acetylglucosamine--N-acetylmuramyl-(pentapeptide) pyrophosphoryl-undecaprenol N-acetylglucosamine transferase (357 aa).

UDP-N-acetyl-alpha-D-glucosamine-binding positions include 15-17 (TGG), Asn-124, Arg-165, Ser-191, and Gln-285.

This sequence belongs to the glycosyltransferase 28 family. MurG subfamily.

The protein localises to the cell inner membrane. It carries out the reaction di-trans,octa-cis-undecaprenyl diphospho-N-acetyl-alpha-D-muramoyl-L-alanyl-D-glutamyl-meso-2,6-diaminopimeloyl-D-alanyl-D-alanine + UDP-N-acetyl-alpha-D-glucosamine = di-trans,octa-cis-undecaprenyl diphospho-[N-acetyl-alpha-D-glucosaminyl-(1-&gt;4)]-N-acetyl-alpha-D-muramoyl-L-alanyl-D-glutamyl-meso-2,6-diaminopimeloyl-D-alanyl-D-alanine + UDP + H(+). It participates in cell wall biogenesis; peptidoglycan biosynthesis. Its function is as follows. Cell wall formation. Catalyzes the transfer of a GlcNAc subunit on undecaprenyl-pyrophosphoryl-MurNAc-pentapeptide (lipid intermediate I) to form undecaprenyl-pyrophosphoryl-MurNAc-(pentapeptide)GlcNAc (lipid intermediate II). The chain is UDP-N-acetylglucosamine--N-acetylmuramyl-(pentapeptide) pyrophosphoryl-undecaprenol N-acetylglucosamine transferase from Microcystis aeruginosa (strain NIES-843 / IAM M-2473).